A 273-amino-acid polypeptide reads, in one-letter code: MTNRQWETLREYDEIKYEFYEGIAKVTINRPEVRNAFTPKTVAEMIDAFSRARDDQNVSVIVLTGEGDLAFCSGGDQKKRGHGGYVGEDQIPRLNVLDLQRLIRIIPKPVIAMVKGYAVGGGNVLNVVCDLTIAADNAIFGQTGPKVGSFDAGYGSGYLARIVGHKKAREIWYLCRQYNAQEALDMGLVNTVVPLDKVEDETVQWCKEIMKHSPTALRFLKAAMNADTDGLAGLQQMAGDATLLYYTTDEAKEGRDAFKEKRDPDFDQFPKFP.

Substrate contacts are provided by residues Arg-34, 73-77 (SGGDQ), Tyr-85, 117-121 (YAVGG), Thr-143, Ser-149, Tyr-246, and Lys-261. Hydrogencarbonate is bound at residue 142 to 144 (QTG). The span at 254-265 (GRDAFKEKRDPD) shows a compositional bias: basic and acidic residues. A disordered region spans residues 254–273 (GRDAFKEKRDPDFDQFPKFP).

It belongs to the enoyl-CoA hydratase/isomerase family. MenB subfamily. Requires hydrogencarbonate as cofactor.

It carries out the reaction 2-succinylbenzoyl-CoA + H(+) = 1,4-dihydroxy-2-naphthoyl-CoA + H2O. Its pathway is quinol/quinone metabolism; 1,4-dihydroxy-2-naphthoate biosynthesis; 1,4-dihydroxy-2-naphthoate from chorismate: step 6/7. It functions in the pathway quinol/quinone metabolism; menaquinone biosynthesis. In terms of biological role, converts o-succinylbenzoyl-CoA (OSB-CoA) to 1,4-dihydroxy-2-naphthoyl-CoA (DHNA-CoA). The sequence is that of 1,4-dihydroxy-2-naphthoyl-CoA synthase from Staphylococcus aureus (strain Mu50 / ATCC 700699).